A 306-amino-acid chain; its full sequence is ATP-dependent (S)-NAD(P)H-hydrate dehydratase (306 aa).

The YjeF C-terminal domain maps to leucine 4–leucine 300. (6S)-NADPHX is bound by residues glycine 104 and asparagine 157–serine 163. Residues lysine 197 to aspartate 201 and glycine 216 to glycine 225 each bind ATP. Aspartate 226 lines the (6S)-NADPHX pocket.

Belongs to the NnrD/CARKD family. Mg(2+) serves as cofactor.

The catalysed reaction is (6S)-NADHX + ATP = ADP + phosphate + NADH + H(+). It catalyses the reaction (6S)-NADPHX + ATP = ADP + phosphate + NADPH + H(+). Functionally, catalyzes the dehydration of the S-form of NAD(P)HX at the expense of ATP, which is converted to ADP. Together with NAD(P)HX epimerase, which catalyzes the epimerization of the S- and R-forms, the enzyme allows the repair of both epimers of NAD(P)HX, a damaged form of NAD(P)H that is a result of enzymatic or heat-dependent hydration. This is ATP-dependent (S)-NAD(P)H-hydrate dehydratase from Dictyostelium discoideum (Social amoeba).